Consider the following 574-residue polypeptide: Membrane protein insertase YidC (574 aa).

6 helical membrane-spanning segments follow: residues 6 to 26, 356 to 376, 380 to 400, 447 to 467, 489 to 509, and 525 to 545; these read VFLI…WGKD, FSIM…LHSF, WGWA…PLSA, GGCL…WVLV, PYFI…KLTP, and PLVF…YWVV.

Belongs to the OXA1/ALB3/YidC family. Type 1 subfamily. Interacts with the Sec translocase complex via SecD. Specifically interacts with transmembrane segments of nascent integral membrane proteins during membrane integration.

The protein resides in the cell inner membrane. Functionally, required for the insertion and/or proper folding and/or complex formation of integral membrane proteins into the membrane. Involved in integration of membrane proteins that insert both dependently and independently of the Sec translocase complex, as well as at least some lipoproteins. Aids folding of multispanning membrane proteins. The polypeptide is Membrane protein insertase YidC (Xanthomonas axonopodis pv. citri (strain 306)).